We begin with the raw amino-acid sequence, 121 residues long: MKFDMLWSKIHRATVTDANLNYVGSITIDEELMEAAELLVGQKVEILDVNNGERFSTYVIRGERGSREICLNGAAARKVAIGDKIIIVAYAQYDRSELSSYKPTVVLVDEKNDIVQIKHEV.

Ser-25 (schiff-base intermediate with substrate; via pyruvic acid) is an active-site residue. The residue at position 25 (Ser-25) is a Pyruvic acid (Ser). Thr-57 provides a ligand contact to substrate. The Proton donor role is filled by Tyr-58. Residue 73–75 (GAA) coordinates substrate.

The protein belongs to the PanD family. In terms of assembly, heterooctamer of four alpha and four beta subunits. The cofactor is pyruvate. Post-translationally, is synthesized initially as an inactive proenzyme, which is activated by self-cleavage at a specific serine bond to produce a beta-subunit with a hydroxyl group at its C-terminus and an alpha-subunit with a pyruvoyl group at its N-terminus.

The protein localises to the cytoplasm. The catalysed reaction is L-aspartate + H(+) = beta-alanine + CO2. It functions in the pathway cofactor biosynthesis; (R)-pantothenate biosynthesis; beta-alanine from L-aspartate: step 1/1. In terms of biological role, catalyzes the pyruvoyl-dependent decarboxylation of aspartate to produce beta-alanine. In Wolinella succinogenes (strain ATCC 29543 / DSM 1740 / CCUG 13145 / JCM 31913 / LMG 7466 / NCTC 11488 / FDC 602W) (Vibrio succinogenes), this protein is Aspartate 1-decarboxylase.